A 416-amino-acid chain; its full sequence is 4-hydroxy-3-methylbut-2-en-1-yl diphosphate synthase (flavodoxin) (416 aa).

[4Fe-4S] cluster is bound by residues Cys-304, Cys-307, Cys-350, and Glu-357.

This sequence belongs to the IspG family. [4Fe-4S] cluster serves as cofactor.

It carries out the reaction (2E)-4-hydroxy-3-methylbut-2-enyl diphosphate + oxidized [flavodoxin] + H2O + 2 H(+) = 2-C-methyl-D-erythritol 2,4-cyclic diphosphate + reduced [flavodoxin]. The protein operates within isoprenoid biosynthesis; isopentenyl diphosphate biosynthesis via DXP pathway; isopentenyl diphosphate from 1-deoxy-D-xylulose 5-phosphate: step 5/6. Functionally, converts 2C-methyl-D-erythritol 2,4-cyclodiphosphate (ME-2,4cPP) into 1-hydroxy-2-methyl-2-(E)-butenyl 4-diphosphate. The chain is 4-hydroxy-3-methylbut-2-en-1-yl diphosphate synthase (flavodoxin) from Rhizobium etli (strain ATCC 51251 / DSM 11541 / JCM 21823 / NBRC 15573 / CFN 42).